Consider the following 31-residue polypeptide: Photosystem II reaction center protein T (31 aa).

A helical transmembrane segment spans residues 3–23; it reads ALVYTFLLVGTLGIIFFAIFF.

The protein belongs to the PsbT family. In terms of assembly, PSII is composed of 1 copy each of membrane proteins PsbA, PsbB, PsbC, PsbD, PsbE, PsbF, PsbH, PsbI, PsbJ, PsbK, PsbL, PsbM, PsbT, PsbY, PsbZ, Psb30/Ycf12, at least 3 peripheral proteins of the oxygen-evolving complex and a large number of cofactors. It forms dimeric complexes.

It is found in the plastid. The protein localises to the chloroplast thylakoid membrane. Functionally, found at the monomer-monomer interface of the photosystem II (PS II) dimer, plays a role in assembly and dimerization of PSII. PSII is a light-driven water plastoquinone oxidoreductase, using light energy to abstract electrons from H(2)O, generating a proton gradient subsequently used for ATP formation. The sequence is that of Photosystem II reaction center protein T from Chlorella vulgaris (Green alga).